A 368-amino-acid chain; its full sequence is MKLDSIDITHCQLVKSTRTARIYRSDTYAIKCLALDFDIPPHNAKFEVSILNKLGNKCKHILPLLESKATDNNDLLLLFPFEEMNLYEFMQMHYKRDRRKKNPYYDLLNPSIPIVADPPVQKYTNQLDVNRYSLSFFRQMVEGIAFLHENKIIHRDIKPQNIMLTNNTSTVSPKLYIIDFGISYDMANNSQTSAEPMDSKVTDISTGIYKAPEVLFGVKCYDGGVDVWSLLIIISQWFQRETSRMGHVPAMIDDGSDDMNSDGSDFRLICSIFEKLGIPSIQKWEEVAQHGSVDAFVGMFGADGDGKYVLDQEKDVQISIVERNMPRLDEIADVKVKQKFINCILGMVSFSPNERWSCQRILQELEKP.

The 368-residue stretch at 1–368 (MKLDSIDITH…QRILQELEKP (368 aa)) folds into the Protein kinase domain. D156 acts as the Proton acceptor in catalysis.

It belongs to the protein kinase superfamily. CMGC Ser/Thr protein kinase family. CDC2/CDKX subfamily.

The catalysed reaction is L-seryl-[protein] + ATP = O-phospho-L-seryl-[protein] + ADP + H(+). It carries out the reaction L-threonyl-[protein] + ATP = O-phospho-L-threonyl-[protein] + ADP + H(+). This chain is Serine/threonine-protein kinase CAK1 (CAK1), found in Saccharomyces cerevisiae (strain ATCC 204508 / S288c) (Baker's yeast).